A 308-amino-acid polypeptide reads, in one-letter code: Mycothiol acetyltransferase (308 aa).

2 consecutive N-acetyltransferase domains span residues 8–155 and 160–308; these read RDVD…PRLR and VQVR…RRAR. Position 39 (E39) interacts with 1D-myo-inositol 2-(L-cysteinylamino)-2-deoxy-alpha-D-glucopyranoside. Residue 84 to 86 coordinates acetyl-CoA; that stretch reads LVV. 1D-myo-inositol 2-(L-cysteinylamino)-2-deoxy-alpha-D-glucopyranoside-binding residues include E187, K226, and E240. Residues 244–246 and 251–257 contribute to the acetyl-CoA site; these read LGI and QGLGLGR. 1D-myo-inositol 2-(L-cysteinylamino)-2-deoxy-alpha-D-glucopyranoside is bound at residue Y278.

Belongs to the acetyltransferase family. MshD subfamily. In terms of assembly, monomer.

It carries out the reaction 1D-myo-inositol 2-(L-cysteinylamino)-2-deoxy-alpha-D-glucopyranoside + acetyl-CoA = mycothiol + CoA + H(+). In terms of biological role, catalyzes the transfer of acetyl from acetyl-CoA to desacetylmycothiol (Cys-GlcN-Ins) to form mycothiol. This chain is Mycothiol acetyltransferase, found in Geodermatophilus obscurus (strain ATCC 25078 / DSM 43160 / JCM 3152 / CCUG 61914 / KCC A-0152 / KCTC 9177 / NBRC 13315 / NRRL B-3577 / G-20).